Reading from the N-terminus, the 479-residue chain is Glutamate--tRNA ligase (479 aa).

A 'HIGH' region motif is present at residues 9-19 (PSPTGLFHIGT). The short motif at 248 to 252 (KLSKR) is the 'KMSKS' region element. Lys251 contacts ATP.

The protein belongs to the class-I aminoacyl-tRNA synthetase family. Glutamate--tRNA ligase type 1 subfamily. As to quaternary structure, monomer.

Its subcellular location is the cytoplasm. It catalyses the reaction tRNA(Glu) + L-glutamate + ATP = L-glutamyl-tRNA(Glu) + AMP + diphosphate. Functionally, catalyzes the attachment of glutamate to tRNA(Glu) in a two-step reaction: glutamate is first activated by ATP to form Glu-AMP and then transferred to the acceptor end of tRNA(Glu). This chain is Glutamate--tRNA ligase, found in Prochlorococcus marinus (strain MIT 9312).